The sequence spans 152 residues: MTHIIIDGDACPVVDSIIDLTTETGIFVTIIRSFSHFSNQLYPPHVSTLYVDDGPDAVDYKIVQLSTKDDIVITQDYGLASLLVDKVLIVMHHNGKIYNSKNIQQLLDKRYMNAQIRKQGGRHKGPPPFTKQDQKVFEKSLLRVIHRIKELD.

This sequence belongs to the UPF0178 family.

The sequence is that of UPF0178 protein SAR0734 from Staphylococcus aureus (strain MRSA252).